A 609-amino-acid polypeptide reads, in one-letter code: Hemagglutinin/proteinase (609 aa).

The first 24 residues, 1–24 (MKMIQRPLNWLVLAGAATGFPLYA), serve as a signal peptide directing secretion. A propeptide spanning residues 25-196 (AQMVTIDDAS…LDQWDGINHA (172 aa)) is cleaved from the precursor. H343 lines the Zn(2+) pocket. Residue E344 is part of the active site. The Zn(2+) site is built by H347 and E367. H426 acts as the Proton donor in catalysis.

Belongs to the peptidase M4 family. Zn(2+) is required as a cofactor.

Its subcellular location is the secreted. May play a role in the pathogenesis of cholera. Hap nicks and activates the A subunit of cholera enterotoxin and related enterotoxins. This chain is Hemagglutinin/proteinase (hap), found in Vibrio cholerae serotype O1 (strain ATCC 39315 / El Tor Inaba N16961).